The primary structure comprises 296 residues: NAD kinase (296 aa).

Aspartate 72 serves as the catalytic Proton acceptor. NAD(+)-binding positions include 72–73 (DG), 146–147 (ND), arginine 157, lysine 174, aspartate 176, 187–192 (TAYALS), and glutamine 247.

This sequence belongs to the NAD kinase family. It depends on a divalent metal cation as a cofactor.

It localises to the cytoplasm. The enzyme catalyses NAD(+) + ATP = ADP + NADP(+) + H(+). Involved in the regulation of the intracellular balance of NAD and NADP, and is a key enzyme in the biosynthesis of NADP. Catalyzes specifically the phosphorylation on 2'-hydroxyl of the adenosine moiety of NAD to yield NADP. The protein is NAD kinase of Pseudomonas savastanoi pv. phaseolicola (strain 1448A / Race 6) (Pseudomonas syringae pv. phaseolicola (strain 1448A / Race 6)).